The chain runs to 327 residues: CREB homolog crh-1 (327 aa).

Positions 16-75 (SPLMMLLFKALQEGGDSEDEARRRREQLNRRPSYRMILKDLETADKVMKKEPEETPPSSV) constitute a KID domain. 2 disordered regions span residues 27 to 114 (QEGG…SPYG) and 151 to 200 (KVFP…VQSL). Residues 35-44 (EARRRREQLN) show a composition bias toward basic and acidic residues. Position 48 is a phosphoserine (serine 48). Over residues 52 to 68 (ILKDLETADKVMKKEPE) the composition is skewed to basic and acidic residues. Positions 71–84 (PPSSVDASPLQFQS) are enriched in polar residues. Gly residues predominate over residues 161–172 (GLGGGGGGGGVP). Over residues 173–199 (GPSSGIAGMSVQPPTSSTPSQQQSVQS) the composition is skewed to low complexity. The region spanning 266-317 (NRKRQVRLLKNREAAKECRRKKKEYVKCLENRVSVLENQNKALIEELKTLKE) is the bZIP domain. Residues 267–292 (RKRQVRLLKNREAAKECRRKKKEYVK) form a basic motif region. A coiled-coil region spans residues 284 to 318 (RRKKKEYVKCLENRVSVLENQNKALIEELKTLKEL). Positions 294–315 (LENRVSVLENQNKALIEELKTL) are leucine-zipper.

Belongs to the bZIP family. In terms of assembly, interacts with CREB-regulated transcription coactivator homolog crtc-1. In terms of processing, transcriptional activity is enhanced by phosphorylation. Phosphorylated by cmk-1. In terms of tissue distribution, expressed widely, including in head neurons AFD, gustatory neurons ASE, the olfactory neurons AWC, and in the ASI sensory neurons, as well as in the intestine and gonads in hermaphrodites.

The protein resides in the nucleus. In terms of biological role, transcription factor. Transcriptional activity probably positively regulated by phosphorylation. Modulates expression of target genes, acting by binding to regulatory cAMP response elements (CRE). Acts downstream of the calcium-triggered CaMKK-CaMK1 signaling cascade, consisting of the protein kinase kinase ckk-1 and the protein kinase cmk-1. Plays a role in learning and memory, feeding behavior, stress response, entry into the dauer stage and modulation of lifespan. Involved in commitment to the developmentally arrested larval state known as dauer, acting by positively regulating the expression of dauer-inhibiting TGF-beta-like daf-7 in the ASI neurons. Plays a role in both associative and non-associative long-term memory (LTM). Involved in modulating feeding behavior, acting by regulating transcription of tryptophan hydroxylase tph-1 in serotonergic ADF neurons. Regulates transcription of genes involved in endoplasmic reticulum (ER) stress. Involved in modulation of lifespan, in response to raised temperature, but independently of the heat-shock response pathway, acting by regulating transcription of FMRFamide-like neuropeptides flp-6 in the AFD neuron. Functionally, plays a role in associative long-term memory (LTM) and learning. Its function is as follows. Plays a role in associative long-term memory (LTM) and learning; perhaps required at the time of acquisition and/or the consolidation phase of memory formation. The sequence is that of CREB homolog crh-1 from Caenorhabditis elegans.